The following is a 283-amino-acid chain: Bifunctional protein FolD (283 aa).

NADP(+) is bound by residues Gly165–Ser167 and Ser190.

This sequence belongs to the tetrahydrofolate dehydrogenase/cyclohydrolase family. In terms of assembly, homodimer.

It catalyses the reaction (6R)-5,10-methylene-5,6,7,8-tetrahydrofolate + NADP(+) = (6R)-5,10-methenyltetrahydrofolate + NADPH. The enzyme catalyses (6R)-5,10-methenyltetrahydrofolate + H2O = (6R)-10-formyltetrahydrofolate + H(+). The protein operates within one-carbon metabolism; tetrahydrofolate interconversion. Catalyzes the oxidation of 5,10-methylenetetrahydrofolate to 5,10-methenyltetrahydrofolate and then the hydrolysis of 5,10-methenyltetrahydrofolate to 10-formyltetrahydrofolate. In Cupriavidus pinatubonensis (strain JMP 134 / LMG 1197) (Cupriavidus necator (strain JMP 134)), this protein is Bifunctional protein FolD.